The primary structure comprises 126 residues: Large ribosomal subunit protein bL12 (126 aa).

The protein belongs to the bacterial ribosomal protein bL12 family. Homodimer. Part of the ribosomal stalk of the 50S ribosomal subunit. Forms a multimeric L10(L12)X complex, where L10 forms an elongated spine to which 2 to 4 L12 dimers bind in a sequential fashion. Binds GTP-bound translation factors.

Forms part of the ribosomal stalk which helps the ribosome interact with GTP-bound translation factors. Is thus essential for accurate translation. In Methylobacterium nodulans (strain LMG 21967 / CNCM I-2342 / ORS 2060), this protein is Large ribosomal subunit protein bL12.